The sequence spans 216 residues: Large ribosomal subunit protein bL21 (216 aa).

Belongs to the bacterial ribosomal protein bL21 family. In terms of assembly, part of the 50S ribosomal subunit. Contacts protein L20.

Functionally, this protein binds to 23S rRNA in the presence of protein L20. This chain is Large ribosomal subunit protein bL21, found in Roseobacter denitrificans (strain ATCC 33942 / OCh 114) (Erythrobacter sp. (strain OCh 114)).